We begin with the raw amino-acid sequence, 469 residues long: MVLEGNPEVGSPRTSDLQHRGNKGSCVLSSPGEDAQPGEEPIKYGELIVLGCCEEGGEETEAQRGEVTGPRAHSCYNGCLASGDKGRRRSRLALSRRSHANGVKPDVMHHISTPLVSKALSNRGQHSISYTLSRSHSVIVEYTHDSDTDMFQIGRSTENMIDFVVTDTSPGGGAAEGPSAQSTISRYACRILCDRRPPYTARIYAAGFDASSNIFLGERAAKWRTPDGLMDGLTTNGVLVMHPAGGFSEDSAPGVWREISVCGNVYTLRDSRSAQQRGKLVENESNVLQDGSLIDLCGATLLWRTPAGLLRAPTLKQLEAQRQEANAARPQCPVGLSTLAFPSPARGRTAPDKQQPWVYVRCGHVHGYHGWGCRRERGPQERECPLCRLVGPYVPLWLGQEAGLCLDPGPPSHAFAPCGHVCSEKTARYWAQTPLPHGTHAFHAACPFCGAWLTGEHGCVRLIFQGPLD.

The segment at methionine 1–glutamate 39 is disordered. Serine 11 bears the Phosphoserine mark.

Belongs to the pellino family. As to quaternary structure, interacts with TRAF6, MAP3K14 and MAP3K7. Post-translationally, phosphorylated by IRAK1 enhancing its E3 ligase activity. Highly expressed in brain, heart and testis, and at lower level in kidney, liver, lung, placenta, small intestine, spleen and stomach. Isoform 1 is not expressed in lung.

It catalyses the reaction S-ubiquitinyl-[E2 ubiquitin-conjugating enzyme]-L-cysteine + [acceptor protein]-L-lysine = [E2 ubiquitin-conjugating enzyme]-L-cysteine + N(6)-ubiquitinyl-[acceptor protein]-L-lysine.. Its pathway is protein modification; protein ubiquitination. E3 ubiquitin ligase catalyzing the covalent attachment of ubiquitin moieties onto substrate proteins. Involved in the TLR and IL-1 signaling pathways via interaction with the complex containing IRAK kinases and TRAF6. Mediates 'Lys-63'-linked polyubiquitination of IRAK1. Can activate AP1/JUN and ELK1. Acts as a regulator of innate immunity by mediating 'Lys-63'-linked polyubiquitination of RIPK2 downstream of NOD1 and NOD2, thereby transforming RIPK2 into a scaffolding protein for downstream effectors, ultimately leading to activation of the NF-kappa-B and MAP kinases signaling. Catalyzes 'Lys-63'-linked polyubiquitination of RIPK2 in parallel of XIAP. The sequence is that of E3 ubiquitin-protein ligase pellino homolog 3 from Homo sapiens (Human).